The sequence spans 106 residues: YcgL domain-containing protein HCH_02617 (106 aa).

The YcgL domain maps to 6–90 (RLISIFRSSK…VQDDYMMDVV (85 aa)).

The protein is YcgL domain-containing protein HCH_02617 of Hahella chejuensis (strain KCTC 2396).